Here is a 475-residue protein sequence, read N- to C-terminus: UDP-glycosyltransferase 1 (475 aa).

The active-site Proton acceptor is the His-15. An an anthocyanidin-binding site is contributed by His-15. The active-site Charge relay is Asp-117. UDP-alpha-D-glucose-binding residues include Ala-345, Gln-347, His-362, Trp-365, Asn-366, Ser-367, and Glu-370. Position 385 (Gly-385) interacts with an anthocyanidin. UDP-alpha-D-glucose is bound by residues Glu-386 and Gln-387.

This sequence belongs to the UDP-glycosyltransferase family. Mostly expressed in leaves and flowers, and, to a lower extent, in roots and stems.

It catalyses the reaction (20S)-protopanaxadiol + UDP-alpha-D-glucose = (20S)-ginsenoside C-K + UDP + H(+). It carries out the reaction (20S)-ginsenoside Rg3 + UDP-alpha-D-glucose = (20S)-ginsenoside Rd + UDP + H(+). The enzyme catalyses (20S)-ginsenoside Rh2 + UDP-alpha-D-glucose = (20S)-ginsenoside F2 + UDP + H(+). The catalysed reaction is (20S)-protopanaxatriol + UDP-alpha-D-glucose = (20S)-ginsenoside F1 + UDP + H(+). It catalyses the reaction dammarenediol-II + UDP-alpha-D-glucose = (20S)-20-O-(beta-D-glucosyl)-3-hydroxydammarene + UDP + H(+). It functions in the pathway secondary metabolite biosynthesis; terpenoid biosynthesis. Functionally, component of the dammarane-type triterpene saponins (e.g. ginsenosides or panaxosides) biosynthetic pathway. Glycosyltransferase that catalyzes the biosynthesis of ginsenoside F1 from protopanaxatriol (PPT). Triggers C20-OH glycosylation of ginsenoside Rg3 to produce ginsenoside Rd. Mediates the conversion of protopanaxadiol (PPD) to the ginsenoside compound K. catalyzes the production of 20S-O-beta-(D-glucosyl)-dammarenediol II form dammarenediol II (DM). In Panax ginseng (Korean ginseng), this protein is UDP-glycosyltransferase 1.